A 655-amino-acid chain; its full sequence is RalA-binding protein 1 (655 aa).

Residues 1 to 158 (MTECFLPPTS…KKSKDLTAAD (158 aa)) are disordered. Residue Thr2 is modified to N-acetylthreonine. Polar residues predominate over residues 24 to 33 (LTRTPSSEEI). Phosphoserine is present on residues Ser29, Ser30, and Ser34. Position 44 is a phosphothreonine (Thr44). Residues Ser48 and Ser62 each carry the phosphoserine modification. The span at 52–68 (DILHEPPDVVSDDEKDH) shows a compositional bias: basic and acidic residues. 69–74 (GKKKGK) serves as a coordination point for ATP. A compositionally biased stretch (basic residues) spans 69 to 79 (GKKKGKFKKKE). Ser92 and Ser93 each carry phosphoserine. The segment covering 102 to 118 (KMKRSKGIHVFKKPSFS) has biased composition (basic residues). Residues 102–119 (KMKRSKGIHVFKKPSFSK) form a nuclear localization signal region. The span at 119–155 (KKKEKDFKIKEKPKEEKHKEEKHKEEKHKEKKSKDLT) shows a compositional bias: basic and acidic residues. Residues 154–219 (LTAADVVKQW…PAVFRECIDY (66 aa)) form a mediates association with membranes and could form transmembrane domains region. A Rho-GAP domain is found at 192–380 (IPLADAVERT…VVLKQVMKPL (189 aa)). The segment at 403-499 (RRQEFLLNCL…LTEQEELLAM (97 aa)) is mediates interaction with RALA and RALB. 418-425 (GGIKDLSK) provides a ligand contact to ATP. 2 positions are modified to phosphoserine: Ser461 and Ser463. Residues 500–655 (EQFLRRQIAS…PSRDRKETSI (156 aa)) form a mediates interaction with REPS1 and REPS2 region. 2 disordered regions span residues 525-551 (QSRQ…DEEE) and 601-655 (AEQQ…ETSI). The span at 536 to 551 (EEYSSESESESEDEEE) shows a compositional bias: acidic residues. Residues 624–655 (GVLEPKAAKEQPKAGKEPAKPSPSRDRKETSI) are compositionally biased toward basic and acidic residues. Residue Ser645 is modified to Phosphoserine.

In terms of assembly, interacts with the GTP-bound form of RALA (via effector domain); during mitosis, recruits RALBP1 to the mitochondrion where it promotes DNM1L phosphorylation and mitochondrial fission. Interacts with DNM1L; mediates its mitotic kinase cyclin B-CDK1-mediated phosphorylation during mitosis to promote mitochondrial fission. Interacts with the mitotic kinase cyclin B-CDK1 during mitosis. Interacts with the GTP-bound form of RALB (via effector domain). Interacts with REPS1; the interaction is direct and does not affect RALA-binding nor GTPase activator activity of RALBP1. Interacts with REPS2; the interaction is direct and does not affect RALA-binding nor GTPase activator activity of RALBP1. Interacts with EPN1, NUMB and TFAP2A during interphase and mitosis. Interacts with AP2M1; as part of the AP2 complex. Interacts with CDC42. Interacts with RAC1. Tyrosine-phosphorylated upon stimulation of cells with EGF. In terms of processing, may undergo proteolytic cleavage to give peptides which reassemble to form a transporter complex. As to expression, expressed ubiquitously but at low levels. Shows a strong expression in the erythrocytes.

It is found in the cell membrane. It localises to the cytoplasm. The protein localises to the cytosol. The protein resides in the cytoskeleton. Its subcellular location is the spindle pole. It is found in the nucleus. It localises to the mitochondrion. The catalysed reaction is an S-substituted glutathione(in) + ATP + H2O = an S-substituted glutathione(out) + ADP + phosphate + H(+). It catalyses the reaction ATP + H2O + xenobioticSide 1 = ADP + phosphate + xenobioticSide 2.. The enzyme catalyses leukotriene C4(in) + ATP + H2O = leukotriene C4(out) + ADP + phosphate + H(+). In terms of biological role, multifunctional protein that functions as a downstream effector of RALA and RALB. As a GTPase-activating protein/GAP can inactivate CDC42 and RAC1 by stimulating their GTPase activity. As part of the Ral signaling pathway, may also regulate ligand-dependent EGF and insulin receptors-mediated endocytosis. During mitosis, may act as a scaffold protein in the phosphorylation of EPSIN/EPN1 by the mitotic kinase cyclin B-CDK1, preventing endocytosis during that phase of the cell cycle. During mitosis, also controls mitochondrial fission as an effector of RALA. Recruited to mitochondrion by RALA, acts as a scaffold to foster the mitotic kinase cyclin B-CDK1-mediated phosphorylation and activation of DNM1L. Functionally, could also function as a primary ATP-dependent active transporter for glutathione conjugates of electrophiles. May also actively catalyze the efflux of a wide range of substrates including xenobiotics like doxorubicin (DOX) contributing to cell multidrug resistance. The polypeptide is RalA-binding protein 1 (Homo sapiens (Human)).